The primary structure comprises 352 residues: Quinolinate synthase (352 aa).

Iminosuccinate contacts are provided by His55 and Ser72. Residue Cys117 coordinates [4Fe-4S] cluster. Residues 143–145 (YVN) and Ser160 each bind iminosuccinate. Residue Cys204 coordinates [4Fe-4S] cluster. Iminosuccinate-binding positions include 230–232 (HPE) and Thr258. Cys303 is a [4Fe-4S] cluster binding site.

Belongs to the quinolinate synthase family. Type 2 subfamily. [4Fe-4S] cluster serves as cofactor.

It is found in the cytoplasm. It carries out the reaction iminosuccinate + dihydroxyacetone phosphate = quinolinate + phosphate + 2 H2O + H(+). Its pathway is cofactor biosynthesis; NAD(+) biosynthesis; quinolinate from iminoaspartate: step 1/1. Its function is as follows. Catalyzes the condensation of iminoaspartate with dihydroxyacetone phosphate to form quinolinate. The protein is Quinolinate synthase of Mycobacterium leprae (strain Br4923).